A 291-amino-acid polypeptide reads, in one-letter code: Stem 31 kDa glycoprotein (291 aa).

An N-linked (GlcNAc...) asparagine glycan is attached at Asn126.

As to expression, accumulates in the stems of developing soybean seedlings.

May function as somatic storage protein during early seedling development. The protein is Stem 31 kDa glycoprotein (VSP25) of Glycine max (Soybean).